We begin with the raw amino-acid sequence, 247 residues long: 1-(5-phosphoribosyl)-5-[(5-phosphoribosylamino)methylideneamino] imidazole-4-carboxamide isomerase 1 (247 aa).

Residue glutamate 8 is the Proton acceptor of the active site. The Proton donor role is filled by aspartate 128.

The protein belongs to the HisA/HisF family.

The protein localises to the cytoplasm. The catalysed reaction is 1-(5-phospho-beta-D-ribosyl)-5-[(5-phospho-beta-D-ribosylamino)methylideneamino]imidazole-4-carboxamide = 5-[(5-phospho-1-deoxy-D-ribulos-1-ylimino)methylamino]-1-(5-phospho-beta-D-ribosyl)imidazole-4-carboxamide. The protein operates within amino-acid biosynthesis; L-histidine biosynthesis; L-histidine from 5-phospho-alpha-D-ribose 1-diphosphate: step 4/9. The chain is 1-(5-phosphoribosyl)-5-[(5-phosphoribosylamino)methylideneamino] imidazole-4-carboxamide isomerase 1 from Ruegeria sp. (strain TM1040) (Silicibacter sp.).